The following is a 1675-amino-acid chain: Clathrin heavy chain 1 (1675 aa).

The residue at position 2 (Ala-2) is an N-acetylalanine. Residues 2 to 479 form a globular terminal domain region; the sequence is AQILPIRFQE…VDPTLALSVY (478 aa). 7 WD40-like repeat regions span residues 24 to 67, 68 to 107, 108 to 149, 150 to 195, 196 to 257, 258 to 301, and 302 to 330; these read NIGF…RPIS, ADSAIMNPASKVIALKAGKTLQIFNIEMKSKMKAHTMTDD, VTFW…SSLA, GCQI…QPIE, GHAA…PEAQ, NDFP…ISGE, and TIFVTAPHEATAGIIGVNRKGQVLSVCVE. Ser-67 carries the post-translational modification Phosphoserine. At Thr-105 the chain carries Phosphothreonine. Phosphotyrosine is present on Tyr-184. Thr-394 carries the phosphothreonine modification. Residues 449–465 are binding site for the uncoating ATPase, involved in lattice disassembly; the sequence is EKWLKEDKLECSEELGD. Residues 480 to 523 form a flexible linker region; that stretch reads LRANVPNKVIQCFAETGQVQKIVLYAKKVGYTPDWIFLLRNVMR. The segment at 524–634 is distal segment; that stretch reads ISPDQGQQFA…RALEHFTDLY (111 aa). A heavy chain arm region spans residues 524 to 1675; sequence ISPDQGQQFA…QPQPGFGYSM (1152 aa). CHCR repeat units lie at residues 537–683, 686–828, 833–972, 979–1124, 1128–1269, 1274–1420, and 1423–1566; these read VQDE…QIWV, ASKY…SEDV, ILVV…PLID, LSET…VKEA, YIKA…FRLA, LHIV…LLLN, and LMVL…RECF. Phosphotyrosine is present on Tyr-634. The segment at 639-1675 is proximal segment; the sequence is AVVHTHLLNP…QPQPGFGYSM (1037 aa). The residue at position 737 (Lys-737) is an N6-succinyllysine. Lys-856 is subject to N6-acetyllysine. Position 899 is a phosphotyrosine (Tyr-899). The residue at position 1167 (Ser-1167) is a Phosphoserine. Phosphotyrosine is present on Tyr-1206. The interval 1213–1522 is involved in binding clathrin light chain; that stretch reads AAKLLYNNVS…YLFKGNNRWK (310 aa). At Ser-1229 the chain carries Phosphoserine. An N6-acetyllysine; alternate modification is found at Lys-1441. Lys-1441 carries the post-translational modification N6-succinyllysine; alternate. Tyr-1477 and Tyr-1487 each carry phosphotyrosine. Phosphoserine is present on Ser-1494. Lys-1501 is modified (N6-acetyllysine). A trimerization region spans residues 1550 to 1675; that stretch reads AEELLQWFLQ…QPQPGFGYSM (126 aa).

It belongs to the clathrin heavy chain family. Clathrin triskelions, composed of 3 heavy chains and 3 light chains, are the basic subunits of the clathrin coat. In the presence of light chains, hub assembly is influenced by both the pH and the concentration of calcium. Interacts with HIP1. Interacts with DENND1A, DENND1B and DENND1C. Interacts with OCRL. Interacts with ERBB2. Interacts with FKBP6. Interacts with CKAP5 and TACC3 forming the TACC3/ch-TOG/clathrin complex located at spindle inter-microtubules bridges; the complex implicates clathrin triskelions; TACC3 and CLTC are proposed to form a composite microtubule interaction surface. Interacts with ATG16L1 (via N-terminus). Interacts with RFTN1; the interaction occurs in response to pathogens. Interacts with USP2 isoform 2. Interacts with TMEM106B (via N-terminus). Interacts with DNAJC6; this interaction produces a local change in heavy-chain contacts, creating a detectable global distortion of the clathrin coat and leads to the recruitment of HSPA8.

It localises to the cytoplasmic vesicle membrane. The protein resides in the membrane. The protein localises to the coated pit. Its subcellular location is the melanosome. It is found in the cytoplasm. It localises to the cytoskeleton. The protein resides in the spindle. Functionally, clathrin is the major protein of the polyhedral coat of coated pits and vesicles. Two different adapter protein complexes link the clathrin lattice either to the plasma membrane or to the trans-Golgi network. Acts as a component of the TACC3/ch-TOG/clathrin complex proposed to contribute to stabilization of kinetochore fibers of the mitotic spindle by acting as inter-microtubule bridge. The TACC3/ch-TOG/clathrin complex is required for the maintenance of kinetochore fiber tension. Plays a role in early autophagosome formation. Interaction with DNAJC6 mediates the recruitment of HSPA8 to the clathrin lattice and creates local destabilization of the lattice promoting uncoating. This Rattus norvegicus (Rat) protein is Clathrin heavy chain 1.